The following is a 212-amino-acid chain: Lipopolysaccharide core heptose(II)-phosphate phosphatase (212 aa).

Positions 1–32 are cleaved as a signal peptide; that stretch reads MSIGGVYELAFCRSSLKSKKYFIILLALAAIA.

The protein belongs to the phosphoglycerate mutase family. Ais subfamily.

It is found in the periplasm. It participates in bacterial outer membrane biogenesis; lipopolysaccharide metabolism. Catalyzes the dephosphorylation of heptose(II) of the outer membrane lipopolysaccharide core. This chain is Lipopolysaccharide core heptose(II)-phosphate phosphatase, found in Shigella boydii serotype 4 (strain Sb227).